A 208-amino-acid chain; its full sequence is Cysteine-rich protein 2 (208 aa).

In terms of domain architecture, LIM zinc-binding 1 spans 5–57 (CPKCDKTVYFAEKVSSLGKDWHKFCLKCERCNKTLTPGGHAEHDGKPFCHKPC). Lys-23 bears the N6-acetyllysine mark. The residue at position 104 (Ser-104) is a Phosphoserine. One can recognise an LIM zinc-binding 2 domain in the interval 126–178 (CPRCNKRVYFAEKVTSLGKDWHRPCLRCERCSKTLTPGGHAEHDGQPYCHKPC). Residues Lys-138 and Lys-144 each carry the N6-acetyllysine modification.

Interacts with TGFB1I1.

The chain is Cysteine-rich protein 2 (Crip2) from Mus musculus (Mouse).